Here is a 473-residue protein sequence, read N- to C-terminus: Photosystem II CP43 reaction center protein (473 aa).

The propeptide occupies 1 to 14 (MKTLYSLRRFYPVE). Thr-15 carries the post-translational modification N-acetylthreonine. Thr-15 carries the phosphothreonine modification. Helical transmembrane passes span 69 to 93 (LFEV…PHLA), 134 to 155 (LLGP…KDRN), 178 to 200 (KALY…RKIT), 255 to 275 (KPFA…LSYS), and 291 to 312 (WFNN…ASQA). Glu-367 provides a ligand contact to [CaMn4O5] cluster. A helical membrane pass occupies residues 447-471 (RARAAAAGFEKGIDRDFEPVLSMTP).

This sequence belongs to the PsbB/PsbC family. PsbC subfamily. PSII is composed of 1 copy each of membrane proteins PsbA, PsbB, PsbC, PsbD, PsbE, PsbF, PsbH, PsbI, PsbJ, PsbK, PsbL, PsbM, PsbT, PsbX, PsbY, PsbZ, Psb30/Ycf12, at least 3 peripheral proteins of the oxygen-evolving complex and a large number of cofactors. It forms dimeric complexes. Binds multiple chlorophylls and provides some of the ligands for the Ca-4Mn-5O cluster of the oxygen-evolving complex. It may also provide a ligand for a Cl- that is required for oxygen evolution. PSII binds additional chlorophylls, carotenoids and specific lipids. is required as a cofactor.

It localises to the plastid. Its subcellular location is the chloroplast thylakoid membrane. In terms of biological role, one of the components of the core complex of photosystem II (PSII). It binds chlorophyll and helps catalyze the primary light-induced photochemical processes of PSII. PSII is a light-driven water:plastoquinone oxidoreductase, using light energy to abstract electrons from H(2)O, generating O(2) and a proton gradient subsequently used for ATP formation. This chain is Photosystem II CP43 reaction center protein, found in Vitis vinifera (Grape).